The chain runs to 203 residues: Octanoyltransferase (203 aa).

Residues 30 to 203 (EDQDNYFFIT…HIIKEGRKLV (174 aa)) enclose the BPL/LPL catalytic domain. Residues 69–76 (RGGSVTFH), 135–137 (SVG), and 148–150 (GIS) each bind substrate. C166 acts as the Acyl-thioester intermediate in catalysis.

It belongs to the LipB family.

The protein resides in the cytoplasm. The catalysed reaction is octanoyl-[ACP] + L-lysyl-[protein] = N(6)-octanoyl-L-lysyl-[protein] + holo-[ACP] + H(+). Its pathway is protein modification; protein lipoylation via endogenous pathway; protein N(6)-(lipoyl)lysine from octanoyl-[acyl-carrier-protein]: step 1/2. In terms of biological role, catalyzes the transfer of endogenously produced octanoic acid from octanoyl-acyl-carrier-protein onto the lipoyl domains of lipoate-dependent enzymes. Lipoyl-ACP can also act as a substrate although octanoyl-ACP is likely to be the physiological substrate. This chain is Octanoyltransferase, found in Persephonella marina (strain DSM 14350 / EX-H1).